The following is a 392-amino-acid chain: uncharacterized protein (392 aa).

Belongs to the peptidase M24 family.

This is an uncharacterized protein from Sinorhizobium fredii (strain NBRC 101917 / NGR234).